The chain runs to 312 residues: Atrochrysone carboxyl ACP thioesterase AacuM (312 aa).

4 residues coordinate Zn(2+): His-103, His-105, Asp-107, and His-108. Asp-107 functions as the Proton donor/acceptor in the catalytic mechanism.

Belongs to the metallo-beta-lactamase superfamily. Requires Zn(2+) as cofactor.

The catalysed reaction is atrochrysone carboxyl-[ACP] + H2O = atrochrysone carboxylate + holo-[ACP] + H(+). Its pathway is secondary metabolite biosynthesis. Its function is as follows. Atrochrysone carboxyl ACP thioesterase; part of the gene cluster that mediates the biosynthesis of the tetrahydroxanthone dimer secalonic acid D. The pathway begins with the synthesis of atrochrysone thioester by the polyketide synthase AacuL. The atrochrysone carboxyl ACP thioesterase AacuM then breaks the thioester bond and releases the atrochrysone carboxylic acid from AacuL. Atrochrysone carboxylic acid is decarboxylated by the decarboxylase AacuI, and oxidized by the anthrone oxygenase AacuG to yield emodin. Emodin is then reduced to emodin hydroquinone by a yet unidentified oxidoreductase. A-ring reduction by the short chain dehydrogenase AacuN, dehydration by the scytalone dehydratase-like protein AacuK and probable spontaneous re-oxidation, results in overall deoxygenation to chrysophanol. Baeyer-Villiger oxidation by the Baeyer-Villiger monooxygenase (BVMO) AacuH then yields monodictyphenone. Monodictyphenone is transformed into compounds with the tetrahydroxanthone skeleton via methylesterification by the methyltransferase AacuQ, followed by the action of the flavin-dependent monooxygenase AacuC, the isomerase AacuP, and the short chain dehydrogenase/reductase AacuF or AacuD. AacuF and AacuD should accept the same compound as a substrate but perform the ketoreduction with a different stereoselectivity, thus yielding blennolides B and A, respectively. In the final step of the biosynthesis, the cytochrome P450 monooxygenase AacuE accepts blennolide B and/or blennolide A to conduct the dimerization reaction to furnish the tetrahydroxanthone dimers, secalonic acids D, B, and F. The polypeptide is Atrochrysone carboxyl ACP thioesterase AacuM (Aspergillus aculeatus (strain ATCC 16872 / CBS 172.66 / WB 5094)).